A 474-amino-acid chain; its full sequence is tRNA-2-methylthio-N(6)-dimethylallyladenosine synthase (474 aa).

The 118-residue stretch at 3 to 120 folds into the MTTase N-terminal domain; it reads KKLHIKTWGC…LPDMIEQVRR (118 aa). [4Fe-4S] cluster is bound by residues Cys-12, Cys-49, Cys-83, Cys-157, Cys-161, and Cys-164. A Radical SAM core domain is found at 143–375; that stretch reads RAEGPTAFVS…QDRITQQAMR (233 aa). Residues 378-441 form the TRAM domain; the sequence is RHMMGTVQRI…TNSLRGKFIR (64 aa).

This sequence belongs to the methylthiotransferase family. MiaB subfamily. In terms of assembly, monomer. [4Fe-4S] cluster serves as cofactor.

It localises to the cytoplasm. It carries out the reaction N(6)-dimethylallyladenosine(37) in tRNA + (sulfur carrier)-SH + AH2 + 2 S-adenosyl-L-methionine = 2-methylsulfanyl-N(6)-dimethylallyladenosine(37) in tRNA + (sulfur carrier)-H + 5'-deoxyadenosine + L-methionine + A + S-adenosyl-L-homocysteine + 2 H(+). Functionally, catalyzes the methylthiolation of N6-(dimethylallyl)adenosine (i(6)A), leading to the formation of 2-methylthio-N6-(dimethylallyl)adenosine (ms(2)i(6)A) at position 37 in tRNAs that read codons beginning with uridine. This Shewanella putrefaciens (strain CN-32 / ATCC BAA-453) protein is tRNA-2-methylthio-N(6)-dimethylallyladenosine synthase.